A 678-amino-acid chain; its full sequence is Mitogen-activated protein kinase kinase kinase 7 (678 aa).

A Protein kinase domain is found at Ile19 to Val271. Residues Val25–Val33 and Lys46 each bind ATP. Asp140 acts as the Proton acceptor in catalysis. Disordered regions lie at residues Asp296 to Pro322, Thr339 to Asn365, Asp431 to Thr455, and Gln616 to Gln647. 2 stretches are compositionally biased toward low complexity: residues Leu313–Pro322 and Thr339–Ser352. Residues Asp353–Asn364 are compositionally biased toward polar residues.

Belongs to the protein kinase superfamily. STE Ser/Thr protein kinase family. MAP kinase kinase kinase subfamily. The cofactor is Mg(2+).

It carries out the reaction L-seryl-[protein] + ATP = O-phospho-L-seryl-[protein] + ADP + H(+). The enzyme catalyses L-threonyl-[protein] + ATP = O-phospho-L-threonyl-[protein] + ADP + H(+). Its function is as follows. Component of a protein kinase signal transduction cascade. Mediator of TGF-beta signal transduction. Responsible for activation of the JNK MAPK pathway (basket, bsk and hemipterous, hep) in response to LPS. Component of the NF-kappa-B pathway; relish-mediated JNK inhibition involves proteasomal degradation of Tak1; certain targets of Relish that are induced during immune responses may facilitate destruction of Tak1 and switch off the JNK cascade. Participates in diverse roles such as control of cell shape and regulation of apoptosis. The chain is Mitogen-activated protein kinase kinase kinase 7 (Tak1) from Drosophila melanogaster (Fruit fly).